A 272-amino-acid polypeptide reads, in one-letter code: Hydroxyethylthiazole kinase (272 aa).

Met-62 is a binding site for substrate. ATP-binding residues include Arg-138 and Thr-183. Substrate is bound at residue Gly-210.

This sequence belongs to the Thz kinase family. Mg(2+) serves as cofactor.

It carries out the reaction 5-(2-hydroxyethyl)-4-methylthiazole + ATP = 4-methyl-5-(2-phosphooxyethyl)-thiazole + ADP + H(+). The protein operates within cofactor biosynthesis; thiamine diphosphate biosynthesis; 4-methyl-5-(2-phosphoethyl)-thiazole from 5-(2-hydroxyethyl)-4-methylthiazole: step 1/1. Its function is as follows. Catalyzes the phosphorylation of the hydroxyl group of 4-methyl-5-beta-hydroxyethylthiazole (THZ). This is Hydroxyethylthiazole kinase from Dichelobacter nodosus (strain VCS1703A).